A 398-amino-acid polypeptide reads, in one-letter code: Diaminopropionate ammonia-lyase (398 aa).

The residue at position 77 (Lys77) is an N6-(pyridoxal phosphate)lysine.

It belongs to the diaminopropionate ammonia-lyase family. As to quaternary structure, homodimer. Pyridoxal 5'-phosphate is required as a cofactor.

It carries out the reaction (S)-2,3-diaminopropanoate + H2O + H(+) = pyruvate + 2 NH4(+). The enzyme catalyses (R)-2,3-diaminopropanoate + H2O + H(+) = pyruvate + 2 NH4(+). Its function is as follows. Catalyzes the alpha,beta-elimination reaction of both L- and D-alpha,beta-diaminopropionate (DAP) to form pyruvate and ammonia. The D-isomer of serine is degraded to pyruvate, though very poorly; other amino acids (L-serine, D- and L-threonine, D- and L-beta-Cl-alanine) are not substrates. This Escherichia coli O157:H7 protein is Diaminopropionate ammonia-lyase (ygeX).